Reading from the N-terminus, the 21-residue chain is uncharacterized protein (21 aa).

This is an uncharacterized protein from Methanococcus voltae.